Consider the following 197-residue polypeptide: Nucleoid occlusion factor SlmA (197 aa).

One can recognise an HTH tetR-type domain in the interval 6–66; it reads NDRRTQILQA…GLIEFIEESL (61 aa). Positions 29–48 form a DNA-binding region, H-T-H motif; that stretch reads TTAALAKQVGVSEAALYRHF.

Belongs to the nucleoid occlusion factor SlmA family. In terms of assembly, homodimer. Interacts with FtsZ.

It is found in the cytoplasm. It localises to the nucleoid. Required for nucleoid occlusion (NO) phenomenon, which prevents Z-ring formation and cell division over the nucleoid. Acts as a DNA-associated cell division inhibitor that binds simultaneously chromosomal DNA and FtsZ, and disrupts the assembly of FtsZ polymers. SlmA-DNA-binding sequences (SBS) are dispersed on non-Ter regions of the chromosome, preventing FtsZ polymerization at these regions. The polypeptide is Nucleoid occlusion factor SlmA (Marinomonas sp. (strain MWYL1)).